The sequence spans 78 residues: Acyl carrier protein (78 aa).

In terms of domain architecture, Carrier spans 2-77; sequence STIEERVKKI…AAIDYVKAHQ (76 aa). An O-(pantetheine 4'-phosphoryl)serine modification is found at Ser37.

Belongs to the acyl carrier protein (ACP) family. 4'-phosphopantetheine is transferred from CoA to a specific serine of apo-ACP by AcpS. This modification is essential for activity because fatty acids are bound in thioester linkage to the sulfhydryl of the prosthetic group.

Its subcellular location is the cytoplasm. The protein operates within lipid metabolism; fatty acid biosynthesis. Functionally, carrier of the growing fatty acid chain in fatty acid biosynthesis. The sequence is that of Acyl carrier protein from Pseudomonas putida (strain ATCC 700007 / DSM 6899 / JCM 31910 / BCRC 17059 / LMG 24140 / F1).